Reading from the N-terminus, the 187-residue chain is Elongation factor P (187 aa).

This sequence belongs to the elongation factor P family.

The protein resides in the cytoplasm. It participates in protein biosynthesis; polypeptide chain elongation. Functionally, involved in peptide bond synthesis. Stimulates efficient translation and peptide-bond synthesis on native or reconstituted 70S ribosomes in vitro. Probably functions indirectly by altering the affinity of the ribosome for aminoacyl-tRNA, thus increasing their reactivity as acceptors for peptidyl transferase. The chain is Elongation factor P from Parvibaculum lavamentivorans (strain DS-1 / DSM 13023 / NCIMB 13966).